We begin with the raw amino-acid sequence, 420 residues long: Gamma-glutamyl phosphate reductase (420 aa).

It belongs to the gamma-glutamyl phosphate reductase family.

The protein resides in the cytoplasm. It catalyses the reaction L-glutamate 5-semialdehyde + phosphate + NADP(+) = L-glutamyl 5-phosphate + NADPH + H(+). It functions in the pathway amino-acid biosynthesis; L-proline biosynthesis; L-glutamate 5-semialdehyde from L-glutamate: step 2/2. Catalyzes the NADPH-dependent reduction of L-glutamate 5-phosphate into L-glutamate 5-semialdehyde and phosphate. The product spontaneously undergoes cyclization to form 1-pyrroline-5-carboxylate. This is Gamma-glutamyl phosphate reductase from Cereibacter sphaeroides (strain ATCC 17029 / ATH 2.4.9) (Rhodobacter sphaeroides).